A 279-amino-acid polypeptide reads, in one-letter code: Pantothenate synthetase (279 aa).

31–38 contributes to the ATP binding site; that stretch reads MGALHEGH. His-38 (proton donor) is an active-site residue. A (R)-pantoate-binding site is contributed by Gln-62. A beta-alanine-binding site is contributed by Gln-62. 148-151 is an ATP binding site; sequence GEKD. Gln-154 is a (R)-pantoate binding site. Residues Val-177 and 185–188 contribute to the ATP site; that span reads LSSR.

Belongs to the pantothenate synthetase family. As to quaternary structure, homodimer.

The protein localises to the cytoplasm. The catalysed reaction is (R)-pantoate + beta-alanine + ATP = (R)-pantothenate + AMP + diphosphate + H(+). Its pathway is cofactor biosynthesis; (R)-pantothenate biosynthesis; (R)-pantothenate from (R)-pantoate and beta-alanine: step 1/1. Functionally, catalyzes the condensation of pantoate with beta-alanine in an ATP-dependent reaction via a pantoyl-adenylate intermediate. In Cereibacter sphaeroides (strain ATCC 17023 / DSM 158 / JCM 6121 / CCUG 31486 / LMG 2827 / NBRC 12203 / NCIMB 8253 / ATH 2.4.1.) (Rhodobacter sphaeroides), this protein is Pantothenate synthetase.